A 504-amino-acid polypeptide reads, in one-letter code: Pyrichalasin C-7 hydroxylase (504 aa).

A signal peptide spans 1 to 17 (MLNSAACIVLAITAVLG). Cys449 is a binding site for heme.

The protein belongs to the cytochrome P450 family. Heme serves as cofactor.

The protein operates within mycotoxin biosynthesis. In terms of biological role, cytochrome P450 monooxygenase; part of the gene cluster that mediates the biosynthesis of the mycotoxin pyrichalasin H, a tyrosine-derived cytochalasan that inhibits the growth of rice seedlings, but also inhibits lymphocyte capping and actin polymerization and alters cell morphology. Pyrichalasin H is indicated as the responsible agent for the genus-specific pathogenicity of M.grisea toward crabgrass. The first step in the pathway is catalyzed by the O-methyltransferase pyiA which methylates free tyrosine to generate the precursor O-methyltyrosine. The hybrid PKS-NRPS pyiS, assisted by the enoyl reductase pyiC, are responsible for fusion of the O-methyltyrosine precursor and the polyketide backbone. The polyketide synthase module (PKS) of pyiS is responsible for the synthesis of the polyketide backbone and the downstream nonribosomal peptide synthetase (NRPS) amidates the carboxyl end of the polyketide with the O-methyltyrosine precursor. As the NRPS A-domain demonstrates substrate tolerance, pyiS can also use phenylalanine, tyrosine and even para-chlorophenylalanine as amino acid precursor, which leads to the production of novel cytochalasans, including halogenated cytochalasans. Because pyiS lacks a designated enoylreductase (ER) domain, the required activity is provided the enoyl reductase pyiC. Reduction by the hydrolyase pyiE leads to 1,5-dihydropyrrolone, which is substrate for dehydration and intra-molecular Diels-Alder cyclization by the Diels-Alderase pyiF to yield the required isoindolone-fused macrocycle. The tailoring cytochrome P450 monooxygenases piyD and piyG catalyze the hydroxylation at C-18 and C-7, respectivily, whereas the short-chain dehydrogenase/reductase pyiH reduces the carbonyl at C-21 in preparation for the transfer of an acetyl group by the acetyltransferase pyiB. These 3 reactions whose order is not clear yet, lead to the production of O-methylpyrichalasin J, a deacetylated pyrichalasin H. Finally, pyiB to converts O-methylpyrichalasin J into the final product pyrichalasin H via acetylation of C-21. In Pyricularia grisea (Crabgrass-specific blast fungus), this protein is Pyrichalasin C-7 hydroxylase.